A 704-amino-acid polypeptide reads, in one-letter code: Protein polyglycylase TTLL10 (704 aa).

Disordered stretches follow at residues 1-32 (MALH…LPSP), 46-125 (GHRA…SVKE), and 137-170 (DADD…PGQG). A compositionally biased stretch (basic residues) spans 93–105 (VSSKRSKRSRIHP). A compositionally biased stretch (basic and acidic residues) spans 114-125 (THEKQMGSSVKE). Positions 169–540 (QGPFFYIGGT…TCQKSLHSQK (372 aa)) constitute a TTL domain. ATP contacts are provided by residues lysine 301, 307 to 308 (QG), 350 to 353 (QRYV), 363 to 365 (KFD), and 406 to 407 (TN). Glutamine 307 is a binding site for a protein. Mg(2+) contacts are provided by aspartate 486, glutamate 499, and asparagine 501. Positions 565-704 (LASSRPLNRL…EQRSTSHRGS (140 aa)) are disordered. Composition is skewed to pro residues over residues 576 to 588 (NPNP…ANPH) and 596 to 612 (HPHP…PPRP). Low complexity-rich tracts occupy residues 616-629 (AASS…AAIS) and 654-667 (SDSS…SEPS).

The cofactor is Mg(2+). Highly expressed in testis. Expressed in brain, heart, kidney, liver, lung, muscle and trachea.

The protein localises to the cytoplasm. Its subcellular location is the cytoskeleton. It is found in the cell projection. The protein resides in the cilium. It localises to the cilium axoneme. It catalyses the reaction (glycyl)(n)-glycyl-L-glutamyl-[protein] + glycine + ATP = (glycyl)(n+1)-glycyl-L-glutamyl-[protein] + ADP + phosphate + H(+). Functionally, polyglycylase which modifies both tubulin and non-tubulin proteins, generating polyglycine side chains of variable lengths on the gamma-carboxyl groups of specific glutamate residues of target proteins. Involved in the elongation step rather than the initiation step of the polyglycylation reaction. Polyglycylates alpha-tubulin and beta-tubulin. Polyglycylates non-tubulin proteins such as nucleosome assembly protein NAP1. The chain is Protein polyglycylase TTLL10 from Mus musculus (Mouse).